Here is a 446-residue protein sequence, read N- to C-terminus: Alpha-1,6-mannosyl-glycoprotein 2-beta-N-acetylglucosaminyltransferase (446 aa).

Residues 1–9 (MRFRIYKRK) lie on the Cytoplasmic side of the membrane. A helical; Signal-anchor for type II membrane protein transmembrane segment spans residues 10 to 29 (VLILTFVVAACGFVLWSSNG). Residues 30 to 446 (RQRKNEALAP…ELCKSYRRLQ (417 aa)) are Lumenal-facing. N-linked (GlcNAc...) asparagine glycans are attached at residues Asn-69 and Asn-86. Residues 123-127 (QVHNR) and Asp-154 each bind substrate. Cys-196 and Cys-210 form a disulfide bridge. A substrate-binding site is contributed by 229-233 (QTKHH). Residue Asp-261 coordinates Mn(2+). A disulfide bridge connects residues Cys-283 and Cys-286. Residue Arg-298 participates in substrate binding. Cystine bridges form between Cys-334/Cys-357, Cys-339/Cys-439, and Cys-378/Cys-386. Mn(2+) is bound at residue His-374.

This sequence belongs to the glycosyltransferase 16 (GT16) protein family. In terms of assembly, homodimer. Mn(2+) serves as cofactor.

The protein resides in the golgi apparatus membrane. The catalysed reaction is an N(4)-{beta-D-GlcNAc-(1-&gt;2)-alpha-D-Man-(1-&gt;3)-[alpha-D-Man-(1-&gt;6)]-beta-D-Man-(1-&gt;4)-beta-D-GlcNAc-(1-&gt;4)-beta-D-GlcNAc}-L-asparaginyl-[protein] + UDP-N-acetyl-alpha-D-glucosamine = N(4)-{beta-D-GlcNAc-(1-&gt;2)-alpha-D-Man-(1-&gt;3)-[beta-D-GlcNAc-(1-&gt;2)-alpha-D-Man-(1-&gt;6)]-beta-D-Man-(1-&gt;4)-beta-D-GlcNAc-(1-&gt;4)-beta-D-GlcNAc}-L-asparaginyl-[protein] + UDP + H(+). Its pathway is protein modification; protein glycosylation. Its function is as follows. Plays an essential role in protein N-glycosylation. Catalyzes the transfer of N-acetylglucosamine (GlcNAc) onto the free terminal mannose moiety in the core structure of the nascent N-linked glycan chain, giving rise to the second branch in complex glycans. This is Alpha-1,6-mannosyl-glycoprotein 2-beta-N-acetylglucosaminyltransferase (MGAT2) from Sus scrofa (Pig).